A 344-amino-acid chain; its full sequence is DNA-directed RNA polymerase subunit alpha (344 aa).

Residues 1–246 (MPVEKFLKDF…EFLFPLIDFE (246 aa)) form an alpha N-terminal domain (alpha-NTD) region. The segment at 259 to 344 (ESSNLLDMSI…VLSKNVKISE (86 aa)) is alpha C-terminal domain (alpha-CTD).

The protein belongs to the RNA polymerase alpha chain family. As to quaternary structure, homodimer. The RNAP catalytic core consists of 2 alpha, 1 beta, 1 beta' and 1 omega subunit. When a sigma factor is associated with the core the holoenzyme is formed, which can initiate transcription.

It catalyses the reaction RNA(n) + a ribonucleoside 5'-triphosphate = RNA(n+1) + diphosphate. Its function is as follows. DNA-dependent RNA polymerase catalyzes the transcription of DNA into RNA using the four ribonucleoside triphosphates as substrates. This chain is DNA-directed RNA polymerase subunit alpha, found in Borrelia garinii subsp. bavariensis (strain ATCC BAA-2496 / DSM 23469 / PBi) (Borreliella bavariensis).